The sequence spans 308 residues: tRNA pseudouridine synthase B (308 aa).

Asp51 (nucleophile) is an active-site residue.

Belongs to the pseudouridine synthase TruB family. Type 1 subfamily.

It carries out the reaction uridine(55) in tRNA = pseudouridine(55) in tRNA. Its function is as follows. Responsible for synthesis of pseudouridine from uracil-55 in the psi GC loop of transfer RNAs. This is tRNA pseudouridine synthase B from Aromatoleum aromaticum (strain DSM 19018 / LMG 30748 / EbN1) (Azoarcus sp. (strain EbN1)).